A 699-amino-acid polypeptide reads, in one-letter code: MSLAQEINRVVAPFEVISEFKPAGDQPTAIAELTERINNGEKDVVLLGATGTGKSATTAWLIEQVQRPTLVMVQNKTLAAQLANEFRELLPNNAVEYFVSYYDYYQPEAYVAQTDTFIEKDSSINEEVERLRHSATNALLTRRDVIVVATVSCIYGLGTPEEYIAGMVTLRKGAEMNRDHLLRKFVSMQYARNDMDFHRGTFRVRGDTVEIIPMYEELAIRIEFFGDEIENIQTLHPLTGEVLRDEEEMYVFPASHYVAGPERMARAIKRIEDELADRLKVLEGQNKLVEAQRLRMRTTYDLEMMQQMGFCNGIENYSVHIDGRNPGTAPHCLIDYFPDDFLLVVDESHVTIPQIGAMYEGDMSRKRNLVDFGFRLPSAMDNRPLKWDEFLERIGQTVYLSATPGKYELGKADGYVQQIIRPTGLIDPEVVVKPTKGQIDDLLGEIRTRTEKNERVLVTTLTKRMAEDLTDYLVGHGVKVEYLHSDVDTLRRVELLRELRMGVFDVLVGINLLREGLDLPEVSLVSILDADKEGFLRSSTSLIQTIGRAARNVSGQVHMYADRITDSMAHAIEETNRRRAIQVQYNTDHGIDPQPLRKKIADITDQLAKEDADTQELLNNNRLAKGGKRGKSAAKGAATVRQDGLAAAPAEDLVGLIEQLTEQMHGAAAELQFEVAARIRDEVKELKRELRQMQSAGHA.

The 154-residue stretch at 35-188 folds into the Helicase ATP-binding domain; the sequence is ERINNGEKDV…DHLLRKFVSM (154 aa). Position 48–55 (48–55) interacts with ATP; that stretch reads GATGTGKS. The Beta-hairpin motif lies at 101-124; the sequence is YYDYYQPEAYVAQTDTFIEKDSSI. Residues 438–604 enclose the Helicase C-terminal domain; that stretch reads QIDDLLGEIR…PLRKKIADIT (167 aa). Residues 654-689 enclose the UVR domain; it reads VGLIEQLTEQMHGAAAELQFEVAARIRDEVKELKRE.

It belongs to the UvrB family. In terms of assembly, forms a heterotetramer with UvrA during the search for lesions. Interacts with UvrC in an incision complex.

Its subcellular location is the cytoplasm. Functionally, the UvrABC repair system catalyzes the recognition and processing of DNA lesions. A damage recognition complex composed of 2 UvrA and 2 UvrB subunits scans DNA for abnormalities. Upon binding of the UvrA(2)B(2) complex to a putative damaged site, the DNA wraps around one UvrB monomer. DNA wrap is dependent on ATP binding by UvrB and probably causes local melting of the DNA helix, facilitating insertion of UvrB beta-hairpin between the DNA strands. Then UvrB probes one DNA strand for the presence of a lesion. If a lesion is found the UvrA subunits dissociate and the UvrB-DNA preincision complex is formed. This complex is subsequently bound by UvrC and the second UvrB is released. If no lesion is found, the DNA wraps around the other UvrB subunit that will check the other stand for damage. The sequence is that of UvrABC system protein B from Paenarthrobacter aurescens (strain TC1).